A 129-amino-acid chain; its full sequence is Large ribosomal subunit protein uL22 (129 aa).

It belongs to the universal ribosomal protein uL22 family. Part of the 50S ribosomal subunit.

This protein binds specifically to 23S rRNA; its binding is stimulated by other ribosomal proteins, e.g. L4, L17, and L20. It is important during the early stages of 50S assembly. It makes multiple contacts with different domains of the 23S rRNA in the assembled 50S subunit and ribosome. Its function is as follows. The globular domain of the protein is located near the polypeptide exit tunnel on the outside of the subunit, while an extended beta-hairpin is found that lines the wall of the exit tunnel in the center of the 70S ribosome. This chain is Large ribosomal subunit protein uL22, found in Beijerinckia indica subsp. indica (strain ATCC 9039 / DSM 1715 / NCIMB 8712).